The chain runs to 311 residues: R2-like ligand binding oxidase (311 aa).

Residues Glu-68, Glu-101, and His-104 each coordinate Mn(2+). Residues 71–162 (VTQDIQPFMA…AAQVRASVTY (92 aa)) constitute a cross-link (3-(O4'-tyrosyl)-valine (Val-Tyr)). Fe cation is bound at residue Glu-101. Fe cation is bound by residues Glu-167, Glu-202, and His-205.

The protein belongs to the ribonucleoside diphosphate reductase small chain family. R2-like ligand binding oxidase subfamily. As to quaternary structure, homodimer. Fe cation serves as cofactor. The cofactor is Mn(2+).

Functionally, probable oxidase that might be involved in lipid metabolism. This Mycobacterium avium (strain 104) protein is R2-like ligand binding oxidase.